The primary structure comprises 1211 residues: RNA helicase Mov10l1 (1211 aa).

Disordered regions lie at residues 340-385 and 674-710; these read KENS…GENG and WNHA…RVGD. Composition is skewed to polar residues over residues 345-372 and 674-688; these read DENI…NNRG and WNHA…QSTS. Over residues 694–710 the composition is skewed to basic and acidic residues; it reads TMTDQAEHGTEERRVGD. 770-777 contributes to the ATP binding site; that stretch reads GPPGTGKT. The short motif at 886-889 is the DEAG box element; the sequence is DEAG. The tract at residues 1192 to 1211 is disordered; sequence DPSYPVVPESTGPEKHQEPS.

The protein belongs to the DNA2/NAM7 helicase family. SDE3 subfamily. In terms of assembly, interacts with PIWIL1. Interacts with PIWIL2. Interacts with PIWIL4. Interacts with HSPA2. Interacts with PLD6. Specifically expressed in testis.

It is found in the cytoplasm. It carries out the reaction ATP + H2O = ADP + phosphate + H(+). In terms of biological role, ATP-dependent RNA helicase required during spermatogenesis to repress transposable elements and prevent their mobilization, which is essential for germline integrity. Acts via the piRNA metabolic process, which mediates the repression of transposable elements during meiosis by forming complexes composed of piRNAs and Piwi proteins and governs the methylation and subsequent repression of transposons. Involved in the primary piRNA metabolic process. Specifically binds to piRNA precursors and promotes the generation of intermediate piRNA processing fragments that are subsequently loaded to Piwi proteins. Acts via its ATP-dependent RNA helicase activity: displays 5'-3' RNA unwinding activity and probably mediates unwinding and funneling of single-stranded piRNA precursor transcripts to the endonuclease that catalyzes the first cleavage step of piRNA processing to generate piRNA intermediate fragments that are subsequently loaded to Piwi proteins. The polypeptide is RNA helicase Mov10l1 (Homo sapiens (Human)).